A 335-amino-acid polypeptide reads, in one-letter code: Hsp90 co-chaperone Cdc37-like 1 (335 aa).

The segment covering 1 to 11 (MEQPWPPPGPW) has biased composition (pro residues). The tract at residues 1 to 42 (MEQPWPPPGPWSFPRTGGETEEESDLDVSPSSSHYSPVPDGG) is disordered. The tract at residues 2 to 170 (EQPWPPPGPW…YEQKIRHFGM (169 aa)) is self-association. The segment covering 27-40 (DVSPSSSHYSPVPD) has biased composition (low complexity). Serine 32 and serine 88 each carry phosphoserine. A coiled-coil region spans residues 84–120 (HNSESLDQEHAKAQTAVSELRQREEEWRQKEEALVQR). The interval 147 to 276 (KTEDEDKSQS…ARVRLYAQSQ (130 aa)) is self-association and interaction with Hsp90. Positions 266–335 (KARVRLYAQS…EDDDRMMDTV (70 aa)) are interaction with Hsp70. The tract at residues 277–335 (SFAPVTVENHAPHSGVGCIGSAEPLPQNPDSLQCCPPAPLCSVDSVVHKEDDDRMMDTV) is required for interaction with STIP1.

This sequence belongs to the CDC37 family. In terms of assembly, self-associates. Forms complexes with Hsp70 and Hsp90. Interacts with CDC37, FKBP4, PPID and STIP1.

The protein localises to the cytoplasm. Functionally, co-chaperone that binds to numerous proteins and promotes their interaction with Hsp70 and Hsp90. In Rattus norvegicus (Rat), this protein is Hsp90 co-chaperone Cdc37-like 1 (Cdc37l1).